A 223-amino-acid polypeptide reads, in one-letter code: Ribonuclease T (223 aa).

In terms of domain architecture, Exonuclease spans 20-194 (VVIDVETAGF…YDTERTAELF (175 aa)). Mg(2+) is bound by residues D23, E25, H181, and D186. The Proton donor/acceptor role is filled by H181.

This sequence belongs to the RNase T family. As to quaternary structure, homodimer. The cofactor is Mg(2+).

Trims short 3' overhangs of a variety of RNA species, leaving a one or two nucleotide 3' overhang. Responsible for the end-turnover of tRNA: specifically removes the terminal AMP residue from uncharged tRNA (tRNA-C-C-A). Also appears to be involved in tRNA biosynthesis. This Shewanella baltica (strain OS185) protein is Ribonuclease T.